Here is a 369-residue protein sequence, read N- to C-terminus: Peptide chain release factor 2 (369 aa).

Position 251 is an N5-methylglutamine (Gln-251).

Belongs to the prokaryotic/mitochondrial release factor family. In terms of processing, methylated by PrmC. Methylation increases the termination efficiency of RF2.

It localises to the cytoplasm. Its function is as follows. Peptide chain release factor 2 directs the termination of translation in response to the peptide chain termination codons UGA and UAA. The protein is Peptide chain release factor 2 of Campylobacter fetus subsp. fetus (strain 82-40).